Reading from the N-terminus, the 921-residue chain is Valine--tRNA ligase (921 aa).

The short motif at 40–50 is the 'HIGH' region element; the sequence is PNVTGSLHMGH. A 'KMSKS' region motif is present at residues 522–526; that stretch reads KMSKS. ATP is bound at residue Lys-525. Positions 849 to 921 form a coiled coil; that stretch reads MADLIDKEAE…LQHKNRIESL (73 aa).

It belongs to the class-I aminoacyl-tRNA synthetase family. ValS type 1 subfamily. In terms of assembly, monomer.

Its subcellular location is the cytoplasm. The catalysed reaction is tRNA(Val) + L-valine + ATP = L-valyl-tRNA(Val) + AMP + diphosphate. In terms of biological role, catalyzes the attachment of valine to tRNA(Val). As ValRS can inadvertently accommodate and process structurally similar amino acids such as threonine, to avoid such errors, it has a 'posttransfer' editing activity that hydrolyzes mischarged Thr-tRNA(Val) in a tRNA-dependent manner. The polypeptide is Valine--tRNA ligase (Legionella pneumophila (strain Lens)).